A 556-amino-acid polypeptide reads, in one-letter code: Energy-dependent translational throttle protein EttA (556 aa).

ABC transporter domains follow at residues 7–260 (YTMH…EQEQ) and 325–551 (IEVQ…RIKY). 40 to 47 (GLNGAGKS) is a binding site for ATP. Positions 96-140 (SEVKNALTRLDEVYALYADPDADFDKLAAEQANLEAIIQAHDGHN) are arm. Residues 243-323 (GNYSSWLEQK…IPPGPRLGDK (81 aa)) are ptIM. 357 to 364 (GANGAGKS) provides a ligand contact to ATP.

Belongs to the ABC transporter superfamily. ABCF family. Translational throttle EttA subfamily. Monomer. Probably contacts ribosomal proteins L1, L5, L33 and S7, the 16S and 23S rRNA and the P-site containing tRNA(fMet).

It localises to the cytoplasm. The catalysed reaction is ATP + H2O = ADP + phosphate + H(+). A translation factor that gates the progression of the 70S ribosomal initiation complex (IC, containing tRNA(fMet) in the P-site) into the translation elongation cycle by using a mechanism sensitive to the ATP/ADP ratio. Binds to the 70S ribosome E-site where it modulates the state of the translating ribosome during subunit translocation. ATP hydrolysis probably frees it from the ribosome, which can enter the elongation phase. This is Energy-dependent translational throttle protein EttA from Haemophilus influenzae (strain ATCC 51907 / DSM 11121 / KW20 / Rd).